The chain runs to 292 residues: Elongation factor Ts (292 aa).

An involved in Mg(2+) ion dislocation from EF-Tu region spans residues 80-83 (TDFV).

This sequence belongs to the EF-Ts family.

Its subcellular location is the cytoplasm. In terms of biological role, associates with the EF-Tu.GDP complex and induces the exchange of GDP to GTP. It remains bound to the aminoacyl-tRNA.EF-Tu.GTP complex up to the GTP hydrolysis stage on the ribosome. The chain is Elongation factor Ts from Cupriavidus necator (strain ATCC 17699 / DSM 428 / KCTC 22496 / NCIMB 10442 / H16 / Stanier 337) (Ralstonia eutropha).